Reading from the N-terminus, the 493-residue chain is Monodehydroascorbate reductase, chloroplastic/mitochondrial (493 aa).

A chloroplast and mitochondrion-targeting transit peptide spans 1–51 (MSAVRRVMALASTTLPTKSGLSLWCPSSPSLARRFPARFSPIGSRIASRSL). Residues 68–71 (GGNA), Glu-95, Arg-102, Lys-107, and 201–202 (RE) contribute to the FAD site. NAD(+) contacts are provided by residues 224–230 (GGYIGME), Glu-248, Arg-254, and Gly-313. 226-230 (YIGME) contacts NADP(+). Positions 254 and 313 each coordinate NADP(+). An FAD-binding site is contributed by Asp-351. 367–368 (EH) contacts NAD(+). An NADP(+)-binding site is contributed by 367 to 368 (EH). Val-369 contacts FAD. Residue Arg-373 participates in L-ascorbate binding. Tyr-398 is a binding site for FAD. Tyr-398 provides a ligand contact to NAD(+). Residue Tyr-398 participates in NADP(+) binding. Arg-400 is an L-ascorbate binding site.

It belongs to the FAD-dependent oxidoreductase family. In terms of assembly, interacts in vitro with TRXy. Requires FAD as cofactor.

Its subcellular location is the plastid. The protein resides in the chloroplast. It is found in the mitochondrion. The catalysed reaction is 2 monodehydro-L-ascorbate radical + NADH + H(+) = 2 L-ascorbate + NAD(+). The enzyme catalyses 2,4,6-trinitrotoluene + NADH = 2,4,6-trinitrotoluene radical + e(-) + NAD(+). Redox regulation of the activity by thioredoxin TRXy1. In terms of biological role, catalyzes the conversion of monodehydroascorbate (MDA) to ascorbate, oxidizing NADH in the process. Mediates phytotoxicity of 2,4,6-trinitrotoluene (TNT), an explosive and environmental pollutant, by reducing TNT and forming a nitro radical that spontaneously reacts with atmospheric oxygen, generating reactive superoxide. Can also use 1-chloro-2,4-dinitrobenzene (CDNB) as substrate, but not 1-chloro-4-nitrobenzene (CNB). The chain is Monodehydroascorbate reductase, chloroplastic/mitochondrial from Arabidopsis thaliana (Mouse-ear cress).